Here is a 465-residue protein sequence, read N- to C-terminus: Biotin biosynthesis bifunctional protein BioCD (465 aa).

The interval 1 to 254 (MTPFLPDRSI…AYGQWRKPRG (254 aa)) is malonyl-ACP O-methyltransferase. ATP contacts are provided by residues D234 and 263-268 (GVGKTL). A DTB synthetase region spans residues 255–465 (VFVTGTDTGV…DSLLSSNASR (211 aa)). Residue T267 coordinates Mg(2+). Residue K283 is part of the active site. T287 is a substrate binding site. ATP-binding positions include D295, 351 to 354 (EGAG), and 435 to 437 (PQL). Positions 295 and 351 each coordinate Mg(2+).

It in the N-terminal section; belongs to the methyltransferase superfamily. This sequence in the C-terminal section; belongs to the dethiobiotin synthetase family. Mg(2+) serves as cofactor.

The protein resides in the cytoplasm. It carries out the reaction (7R,8S)-7,8-diammoniononanoate + CO2 + ATP = (4R,5S)-dethiobiotin + ADP + phosphate + 3 H(+). The enzyme catalyses malonyl-[ACP] + S-adenosyl-L-methionine = malonyl-[ACP] methyl ester + S-adenosyl-L-homocysteine. Its pathway is cofactor biosynthesis; biotin biosynthesis; biotin from 7,8-diaminononanoate: step 1/2. The protein operates within cofactor biosynthesis; biotin biosynthesis. Converts the free carboxyl group of a malonyl-thioester to its methyl ester by transfer of a methyl group from S-adenosyl-L-methionine (SAM). It allows synthesis of pimeloyl-ACP via the fatty acid synthetic pathway. Functionally, catalyzes a mechanistically unusual reaction, the ATP-dependent insertion of CO2 between the N7 and N8 nitrogen atoms of 7,8-diaminopelargonic acid (DAPA, also called 7,8-diammoniononanoate) to form a ureido ring. The protein is Biotin biosynthesis bifunctional protein BioCD of Bordetella avium (strain 197N).